The sequence spans 428 residues: D-amino acid dehydrogenase (428 aa).

3-17 is an FAD binding site; the sequence is VVILGSGVVGVASAY.

It belongs to the DadA oxidoreductase family. FAD is required as a cofactor.

It carries out the reaction a D-alpha-amino acid + A + H2O = a 2-oxocarboxylate + AH2 + NH4(+). It functions in the pathway amino-acid degradation; D-alanine degradation; NH(3) and pyruvate from D-alanine: step 1/1. Its function is as follows. Oxidative deamination of D-amino acids. This is D-amino acid dehydrogenase from Burkholderia cenocepacia (strain HI2424).